Consider the following 735-residue polypeptide: Ribosomal RNA large subunit methyltransferase K/L (735 aa).

The region spanning 45–156 is the THUMP domain; the sequence is DGYRACLWSR…RDSLSFSLDL (112 aa).

Belongs to the methyltransferase superfamily. RlmKL family.

It is found in the cytoplasm. The catalysed reaction is guanosine(2445) in 23S rRNA + S-adenosyl-L-methionine = N(2)-methylguanosine(2445) in 23S rRNA + S-adenosyl-L-homocysteine + H(+). The enzyme catalyses guanosine(2069) in 23S rRNA + S-adenosyl-L-methionine = N(2)-methylguanosine(2069) in 23S rRNA + S-adenosyl-L-homocysteine + H(+). Specifically methylates the guanine in position 2445 (m2G2445) and the guanine in position 2069 (m7G2069) of 23S rRNA. The protein is Ribosomal RNA large subunit methyltransferase K/L of Allochromatium vinosum (strain ATCC 17899 / DSM 180 / NBRC 103801 / NCIMB 10441 / D) (Chromatium vinosum).